The following is a 449-amino-acid chain: L-seryl-tRNA(Sec) selenium transferase (449 aa).

An N6-(pyridoxal phosphate)lysine modification is found at Lys-286.

The protein belongs to the SelA family. Requires pyridoxal 5'-phosphate as cofactor.

It localises to the cytoplasm. The catalysed reaction is L-seryl-tRNA(Sec) + selenophosphate + H(+) = L-selenocysteinyl-tRNA(Sec) + phosphate. It participates in aminoacyl-tRNA biosynthesis; selenocysteinyl-tRNA(Sec) biosynthesis; selenocysteinyl-tRNA(Sec) from L-seryl-tRNA(Sec) (bacterial route): step 1/1. Its function is as follows. Converts seryl-tRNA(Sec) to selenocysteinyl-tRNA(Sec) required for selenoprotein biosynthesis. The sequence is that of L-seryl-tRNA(Sec) selenium transferase from Sulfurimonas denitrificans (strain ATCC 33889 / DSM 1251) (Thiomicrospira denitrificans (strain ATCC 33889 / DSM 1251)).